The primary structure comprises 318 residues: Porphobilinogen deaminase (318 aa).

Cysteine 245 carries the post-translational modification S-(dipyrrolylmethanemethyl)cysteine.

The protein belongs to the HMBS family. In terms of assembly, monomer. Dipyrromethane serves as cofactor.

The catalysed reaction is 4 porphobilinogen + H2O = hydroxymethylbilane + 4 NH4(+). It participates in porphyrin-containing compound metabolism; protoporphyrin-IX biosynthesis; coproporphyrinogen-III from 5-aminolevulinate: step 2/4. The protein operates within porphyrin-containing compound metabolism; chlorophyll biosynthesis. In terms of biological role, tetrapolymerization of the monopyrrole PBG into the hydroxymethylbilane pre-uroporphyrinogen in several discrete steps. This is Porphobilinogen deaminase from Prochlorococcus marinus (strain MIT 9215).